The chain runs to 811 residues: Vacuolar protein sorting-associated protein 70 (811 aa).

The segment covering 1–21 (MRMIQRERKREKEEGQLKERT) has biased composition (basic and acidic residues). Positions 1–63 (MRMIQRERKR…MNDSFTLTSR (63 aa)) are disordered. An N-linked (GlcNAc...) asparagine glycan is attached at N55. A helical membrane pass occupies residues 90 to 110 (FMYLILASLLLYMGFVAAFAP). The N-linked (GlcNAc...) asparagine glycan is linked to N237. The segment at 334 to 367 (FSDTPGDPTTPGYPSKDSDTEHMSPVGRVPRIPS) is disordered. Positions 336 to 345 (DTPGDPTTPG) are enriched in low complexity. 3 residues coordinate Zn(2+): H445, D456, and D522. 2 N-linked (GlcNAc...) asparagine glycosylation sites follow: N568 and N599. Residue H607 coordinates Zn(2+). N670 carries an N-linked (GlcNAc...) asparagine glycan.

Belongs to the peptidase M28 family. M28B subfamily. Zn(2+) serves as cofactor.

It localises to the membrane. Functionally, involved in vacuolar protein sorting. The polypeptide is Vacuolar protein sorting-associated protein 70 (VPS70) (Saccharomyces cerevisiae (strain ATCC 204508 / S288c) (Baker's yeast)).